A 149-amino-acid polypeptide reads, in one-letter code: Arginine repressor (149 aa).

Belongs to the ArgR family.

It is found in the cytoplasm. It functions in the pathway amino-acid biosynthesis; L-arginine biosynthesis [regulation]. Regulates arginine biosynthesis genes. In Oceanobacillus iheyensis (strain DSM 14371 / CIP 107618 / JCM 11309 / KCTC 3954 / HTE831), this protein is Arginine repressor.